The chain runs to 369 residues: tRNA 2-selenouridine synthase (369 aa).

Positions 15-138 (FIAGQPLIDL…MRQYLIGVIE (124 aa)) constitute a Rhodanese domain. Cys-98 (S-selanylcysteine intermediate) is an active-site residue.

It belongs to the SelU family. As to quaternary structure, monomer.

It carries out the reaction 5-methylaminomethyl-2-thiouridine(34) in tRNA + selenophosphate + (2E)-geranyl diphosphate + H2O + H(+) = 5-methylaminomethyl-2-selenouridine(34) in tRNA + (2E)-thiogeraniol + phosphate + diphosphate. The enzyme catalyses 5-methylaminomethyl-2-thiouridine(34) in tRNA + (2E)-geranyl diphosphate = 5-methylaminomethyl-S-(2E)-geranyl-thiouridine(34) in tRNA + diphosphate. It catalyses the reaction 5-methylaminomethyl-S-(2E)-geranyl-thiouridine(34) in tRNA + selenophosphate + H(+) = 5-methylaminomethyl-2-(Se-phospho)selenouridine(34) in tRNA + (2E)-thiogeraniol. The catalysed reaction is 5-methylaminomethyl-2-(Se-phospho)selenouridine(34) in tRNA + H2O = 5-methylaminomethyl-2-selenouridine(34) in tRNA + phosphate. Its function is as follows. Involved in the post-transcriptional modification of the uridine at the wobble position (U34) of tRNA(Lys), tRNA(Glu) and tRNA(Gln). Catalyzes the conversion of 2-thiouridine (S2U-RNA) to 2-selenouridine (Se2U-RNA). Acts in a two-step process involving geranylation of 2-thiouridine (S2U) to S-geranyl-2-thiouridine (geS2U) and subsequent selenation of the latter derivative to 2-selenouridine (Se2U) in the tRNA chain. In Shewanella sp. (strain MR-7), this protein is tRNA 2-selenouridine synthase.